We begin with the raw amino-acid sequence, 185 residues long: Ribosome-recycling factor (185 aa).

It belongs to the RRF family.

The protein localises to the cytoplasm. In terms of biological role, responsible for the release of ribosomes from messenger RNA at the termination of protein biosynthesis. May increase the efficiency of translation by recycling ribosomes from one round of translation to another. In Campylobacter jejuni subsp. jejuni serotype O:23/36 (strain 81-176), this protein is Ribosome-recycling factor.